We begin with the raw amino-acid sequence, 229 residues long: Enolase-phosphatase E1 (229 aa).

This sequence belongs to the HAD-like hydrolase superfamily. MasA/MtnC family. As to quaternary structure, monomer. Mg(2+) is required as a cofactor.

The catalysed reaction is 5-methylsulfanyl-2,3-dioxopentyl phosphate + H2O = 1,2-dihydroxy-5-(methylsulfanyl)pent-1-en-3-one + phosphate. It participates in amino-acid biosynthesis; L-methionine biosynthesis via salvage pathway; L-methionine from S-methyl-5-thio-alpha-D-ribose 1-phosphate: step 3/6. The protein operates within amino-acid biosynthesis; L-methionine biosynthesis via salvage pathway; L-methionine from S-methyl-5-thio-alpha-D-ribose 1-phosphate: step 4/6. Its function is as follows. Bifunctional enzyme that catalyzes the enolization of 2,3-diketo-5-methylthiopentyl-1-phosphate (DK-MTP-1-P) into the intermediate 2-hydroxy-3-keto-5-methylthiopentenyl-1-phosphate (HK-MTPenyl-1-P), which is then dephosphorylated to form the acireductone 1,2-dihydroxy-3-keto-5-methylthiopentene (DHK-MTPene). The polypeptide is Enolase-phosphatase E1 (Yersinia pseudotuberculosis serotype O:1b (strain IP 31758)).